A 395-amino-acid chain; its full sequence is Methylmalonyl-CoA decarboxylase subunit beta (395 aa).

The next 9 membrane-spanning stretches (helical) occupy residues 17-37 (LNMG…LAIA), 43-63 (LLLV…AGMM), 103-123 (GIFP…GPLI), 128-148 (SLLL…GAIA), 180-200 (PHLM…VPII), 230-250 (IIFP…AATL), 278-298 (INII…AEAF), 304-324 (LAIL…GVLL), and 374-394 (GPNV…LSLF).

It belongs to the GcdB/MmdB/OadB family. The methylmalonyl-CoA decarboxylase is composed of four subunits: the carboxyltransferase alpha subunit (MmdA), the tunnel beta subunit (MmdB), the biotin-containing gamma subunit (MmdC) and the delta subunit (MmdD). Post-translationally, the N-terminus is blocked.

Its subcellular location is the cell membrane. The enzyme catalyses (S)-methylmalonyl-CoA + Na(+)(in) + H(+)(out) = propanoyl-CoA + Na(+)(out) + CO2. Tunnel subunit of the sodium ion pump methylmalonyl-CoA decarboxylase, which converts the chemical energy of a decarboxylation reaction into an electrochemical gradient of Na(+) ions across the cytoplasmic membrane, thereby creating a sodium ion motive force that is used for ATP synthesis. The beta subunit catalyzes the decarboxylation of the carboxybiotin carrier protein and the coupled export of Na(+) ions. This is Methylmalonyl-CoA decarboxylase subunit beta from Propionigenium modestum.